Here is a 624-residue protein sequence, read N- to C-terminus: Ceramide transfer protein (624 aa).

A compositionally biased stretch (polar residues) spans 1–11 (MSDNQSWNSSG). Residues 1–24 (MSDNQSWNSSGSEEDPETESGPPV) form a disordered region. A PH domain is found at 23–117 (PVERCGVLSK…WIDAIEQHKT (95 aa)). Position 126 is a phosphoserine (Ser-126). Ser-132 bears the Phosphoserine; by PKD mark. Ser-135 bears the Phosphoserine mark. Residues 263–303 (IELMVKREDSWQKRLDKETEKKRRTEEAYKNAMTELKKKSH) adopt a coiled-coil conformation. Ser-315 carries the post-translational modification Phosphoserine. An FFAT motif is present at residues 321–327 (EFFDAVE). A Phosphotyrosine modification is found at Tyr-372. Phosphoserine is present on residues Ser-373, Ser-377, and Ser-380. Residues 389–618 (DVHRFSSQVE…FTSYVQEKTA (230 aa)) enclose the START domain. The an N-acylsphing-4-enine site is built by Glu-472, Gln-493, Asn-530, and Tyr-579.

As to quaternary structure, interacts with VAPA and VAPB. Interaction with VAPB is less efficient than with VAPA. Interacts (via FFAT motif) with MOSPD2 (via MSP domain). In terms of processing, phosphorylation on Ser-132 decreases the affinity toward phosphatidylinositol 4-phosphate at Golgi membranes and reduces ceramide transfer activity. Inactivated by hyperphosphorylation of serine residues by CSNK1G2/CK1 that triggers dissociation from the Golgi complex, thus down-regulating ER-to-Golgi transport of ceramide and sphingomyelin synthesis. Widely expressed.

The protein resides in the cytoplasm. Its subcellular location is the golgi apparatus. It is found in the endoplasmic reticulum. It catalyses the reaction N-hexadecanoylsphing-4-enine(in) = N-hexadecanoylsphing-4-enine(out). Functionally, shelters ceramides and diacylglycerol lipids inside its START domain and mediates the intracellular trafficking of ceramides and diacylglycerol lipids in a non-vesicular manner. The protein is Ceramide transfer protein of Homo sapiens (Human).